Reading from the N-terminus, the 184-residue chain is Ribulose bisphosphate carboxylase small subunit, chloroplastic 2 (184 aa).

The N-terminal 59 residues, 1-59 (MASSMMSNAATAVAVAATSGGAQANMVAPFNGLKSIASFPVTRKSNDITSIASNGGRVQ), are a transit peptide targeting the chloroplast.

The protein belongs to the RuBisCO small chain family. Heterohexadecamer of 8 large and 8 small subunits.

It is found in the plastid. It localises to the chloroplast. In terms of biological role, ruBisCO catalyzes two reactions: the carboxylation of D-ribulose 1,5-bisphosphate, the primary event in carbon dioxide fixation, as well as the oxidative fragmentation of the pentose substrate. Both reactions occur simultaneously and in competition at the same active site. Although the small subunit is not catalytic it is essential for maximal activity. In Amaranthus hypochondriacus (Prince-of-Wales feather), this protein is Ribulose bisphosphate carboxylase small subunit, chloroplastic 2.